We begin with the raw amino-acid sequence, 303 residues long: E3 ubiquitin-protein ligase CCNB1IP1 homolog (303 aa).

The segment at 3–42 adopts an RING-type; degenerate zinc-finger fold; sequence CNACWRELEGQAVSTTCGHLLCTEDAKKILSNDAACPICD. Residues 119-184 adopt a coiled-coil conformation; it reads LEEVHTAYQK…YESAKRSAIQ (66 aa). The disordered stretch occupies residues 201 to 268; that stretch reads VPNIMDSSDP…DIRPRQPARP (68 aa).

In terms of assembly, interacts with ZIP4 and PTD. As to expression, expressed in young panicles.

It is found in the nucleus. The protein localises to the chromosome. The catalysed reaction is S-ubiquitinyl-[E2 ubiquitin-conjugating enzyme]-L-cysteine + [acceptor protein]-L-lysine = [E2 ubiquitin-conjugating enzyme]-L-cysteine + N(6)-ubiquitinyl-[acceptor protein]-L-lysine.. It participates in protein modification; protein ubiquitination. Functionally, ubiquitin E3 ligase required for class I crossover (CO) formation during meiosis. The sequence is that of E3 ubiquitin-protein ligase CCNB1IP1 homolog from Oryza sativa subsp. japonica (Rice).